The primary structure comprises 464 residues: Protein FAM90A14 (464 aa).

Disordered regions lie at residues 1 to 42 (MMAR…DPRL), 70 to 389 (PATL…HDGA), and 411 to 437 (APSF…SEAP). Basic and acidic residues-rich tracts occupy residues 74–89 (GKKE…KPRV) and 97–114 (NKDK…DPQR). Positions 180–197 (LASLSPLRKASLSSSSSL) are enriched in low complexity.

It belongs to the FAM90 family.

The polypeptide is Protein FAM90A14 (Homo sapiens (Human)).